Reading from the N-terminus, the 191-residue chain is Zinc finger protein GIS2 (191 aa).

The C2H2-type zinc finger occupies 55-77; that stretch reads FKCHYCFRNFPTSQALGGHQNAH.

As to expression, expressed in inflorescence meristems, floral meristems and stem epidermis.

The protein localises to the nucleus. Functionally, probable transcription factor required for the initiation of inflorescence trichomes in response to gibberellin and cytokinin. Is not involved in the regulation of trichome branching. Is functionally equivalent to ZFP8. This is Zinc finger protein GIS2 (GIS2) from Arabidopsis thaliana (Mouse-ear cress).